A 143-amino-acid chain; its full sequence is Transcriptional regulator MraZ (143 aa).

SpoVT-AbrB domains lie at 5–47 (EYTH…PLIE) and 76–119 (ACEC…DAER).

Belongs to the MraZ family. Forms oligomers.

The protein localises to the cytoplasm. It is found in the nucleoid. In Limosilactobacillus fermentum (strain NBRC 3956 / LMG 18251) (Lactobacillus fermentum), this protein is Transcriptional regulator MraZ.